The sequence spans 138 residues: MAANFLKSLFGEEDIDEQDGLYETSEQVSTPANTSNKVVSINSGRLNQMSQISLYEPRLYADVKQIASQLLEGHAVIVNFTQMDANVAARLVDFLNGTVFAIDGEMKRIGKEIFLCTPKNYEISGSLTSNLKNDGDKF.

The protein belongs to the SepF family. In terms of assembly, homodimer. Interacts with FtsZ.

The protein localises to the cytoplasm. Cell division protein that is part of the divisome complex and is recruited early to the Z-ring. Probably stimulates Z-ring formation, perhaps through the cross-linking of FtsZ protofilaments. Its function overlaps with FtsA. This chain is Cell division protein SepF, found in Limosilactobacillus reuteri (strain DSM 20016) (Lactobacillus reuteri).